A 625-amino-acid polypeptide reads, in one-letter code: tRNA uridine 5-carboxymethylaminomethyl modification enzyme MnmG (625 aa).

FAD contacts are provided by residues 11-16, V123, and S178; that span reads GAGHAG. 271–285 is a binding site for NAD(+); the sequence is GPRYCPSIETKIVTF. Q368 contacts FAD.

This sequence belongs to the MnmG family. As to quaternary structure, homodimer. Heterotetramer of two MnmE and two MnmG subunits. The cofactor is FAD.

It is found in the cytoplasm. Functionally, NAD-binding protein involved in the addition of a carboxymethylaminomethyl (cmnm) group at the wobble position (U34) of certain tRNAs, forming tRNA-cmnm(5)s(2)U34. This chain is tRNA uridine 5-carboxymethylaminomethyl modification enzyme MnmG, found in Bacteroides fragilis (strain ATCC 25285 / DSM 2151 / CCUG 4856 / JCM 11019 / LMG 10263 / NCTC 9343 / Onslow / VPI 2553 / EN-2).